A 160-amino-acid chain; its full sequence is Phosphopantetheine adenylyltransferase (160 aa).

Substrate is bound at residue Thr-11. ATP contacts are provided by residues 11-12 (TF) and His-19. Residues Lys-43, Leu-75, and Arg-89 each contribute to the substrate site. ATP contacts are provided by residues 90-92 (GLR), Glu-100, and 125-131 (HMFVSAS).

This sequence belongs to the bacterial CoaD family. In terms of assembly, homohexamer. Requires Mg(2+) as cofactor.

The protein localises to the cytoplasm. The enzyme catalyses (R)-4'-phosphopantetheine + ATP + H(+) = 3'-dephospho-CoA + diphosphate. It functions in the pathway cofactor biosynthesis; coenzyme A biosynthesis; CoA from (R)-pantothenate: step 4/5. Functionally, reversibly transfers an adenylyl group from ATP to 4'-phosphopantetheine, yielding dephospho-CoA (dPCoA) and pyrophosphate. This is Phosphopantetheine adenylyltransferase from Methylobacillus flagellatus (strain ATCC 51484 / DSM 6875 / VKM B-1610 / KT).